The chain runs to 109 residues: MKLSIIIIATSLVIAVVAFPSKDSKAIENDKTEQRMEIVVQETARACSKQIGDKRKRNCECCGKTVVCGTIYVGGKEVNQCMDKTSDNAILNGLGKGMNFIENTFSFCV.

The signal sequence occupies residues 1-18 (MKLSIIIIATSLVIAVVA). A propeptide spanning residues 19-46 (FPSKDSKAIENDKTEQRMEIVVQETARA) is cleaved from the precursor. Cystine bridges form between cysteine 47–cysteine 62, cysteine 59–cysteine 108, and cysteine 61–cysteine 81.

It belongs to the neurotoxin 25 family. F7 subfamily. In terms of tissue distribution, expressed by the venom gland.

The protein resides in the secreted. Putative ion channel inhibitor. The protein is Hainantoxin-XVIII-2 of Cyriopagopus hainanus (Chinese bird spider).